The chain runs to 373 residues: Lipoyl synthase (373 aa).

Residues 12–36 form a disordered region; it reads HVVSNDHPSSSPLQPGVKQSGEDKI. Residues Cys-81, Cys-86, Cys-92, Cys-107, Cys-111, Cys-114, and Ser-323 each coordinate [4Fe-4S] cluster. The region spanning 93–312 is the Radical SAM core domain; the sequence is FSHGTATFMI…EEYGMALGFS (220 aa). A disordered region spans residues 346 to 373; it reads PAVSSTEHRERHTIASKSASKTESIRHR.

The protein belongs to the radical SAM superfamily. Lipoyl synthase family. It depends on [4Fe-4S] cluster as a cofactor.

Its subcellular location is the cytoplasm. It carries out the reaction [[Fe-S] cluster scaffold protein carrying a second [4Fe-4S](2+) cluster] + N(6)-octanoyl-L-lysyl-[protein] + 2 oxidized [2Fe-2S]-[ferredoxin] + 2 S-adenosyl-L-methionine + 4 H(+) = [[Fe-S] cluster scaffold protein] + N(6)-[(R)-dihydrolipoyl]-L-lysyl-[protein] + 4 Fe(3+) + 2 hydrogen sulfide + 2 5'-deoxyadenosine + 2 L-methionine + 2 reduced [2Fe-2S]-[ferredoxin]. It functions in the pathway protein modification; protein lipoylation via endogenous pathway; protein N(6)-(lipoyl)lysine from octanoyl-[acyl-carrier-protein]: step 2/2. Catalyzes the radical-mediated insertion of two sulfur atoms into the C-6 and C-8 positions of the octanoyl moiety bound to the lipoyl domains of lipoate-dependent enzymes, thereby converting the octanoylated domains into lipoylated derivatives. This is Lipoyl synthase from Xylella fastidiosa (strain 9a5c).